The chain runs to 210 residues: Orotate phosphoribosyltransferase (210 aa).

5-phospho-alpha-D-ribose 1-diphosphate-binding positions include R94, K98, H100, and E120 to S128. Orotate is bound at residue S124.

Belongs to the purine/pyrimidine phosphoribosyltransferase family. PyrE subfamily. As to quaternary structure, homodimer. Requires Mg(2+) as cofactor.

It carries out the reaction orotidine 5'-phosphate + diphosphate = orotate + 5-phospho-alpha-D-ribose 1-diphosphate. The protein operates within pyrimidine metabolism; UMP biosynthesis via de novo pathway; UMP from orotate: step 1/2. Catalyzes the transfer of a ribosyl phosphate group from 5-phosphoribose 1-diphosphate to orotate, leading to the formation of orotidine monophosphate (OMP). This chain is Orotate phosphoribosyltransferase, found in Bacillus cereus (strain G9842).